A 235-amino-acid chain; its full sequence is Phosphoribosylaminoimidazole-succinocarboxamide synthase (235 aa).

It belongs to the SAICAR synthetase family.

The enzyme catalyses 5-amino-1-(5-phospho-D-ribosyl)imidazole-4-carboxylate + L-aspartate + ATP = (2S)-2-[5-amino-1-(5-phospho-beta-D-ribosyl)imidazole-4-carboxamido]succinate + ADP + phosphate + 2 H(+). It participates in purine metabolism; IMP biosynthesis via de novo pathway; 5-amino-1-(5-phospho-D-ribosyl)imidazole-4-carboxamide from 5-amino-1-(5-phospho-D-ribosyl)imidazole-4-carboxylate: step 1/2. The protein is Phosphoribosylaminoimidazole-succinocarboxamide synthase of Exiguobacterium sibiricum (strain DSM 17290 / CCUG 55495 / CIP 109462 / JCM 13490 / 255-15).